The sequence spans 467 residues: Stromal membrane-associated protein 1 (467 aa).

Positions 18-136 constitute an Arf-GAP domain; it reads QLILSKLLRE…KYYDKNAIAI (119 aa). A C4-type zinc finger spans residues 33-56; it reads CADCEAKGPRWASWNIGVFICIRC. Over residues 145–155 the composition is skewed to polar residues; that stretch reads PLQPLVSSPSL. Disordered stretches follow at residues 145–224 and 408–467; these read PLQP…LDGP and KFGL…QLWK. Composition is skewed to basic and acidic residues over residues 160–185 and 192–204; these read DKNKLEKEKEKKKEEKKREKEPEKPA and KLQKKDQQLEPKK. Residues 218-222 carry the Interaction with clathrin heavy chains motif; that stretch reads LLGLD. A compositionally biased stretch (polar residues) spans 413-438; it reads QAQQPQWSLSQMNQQMAGMSISSATP. Low complexity predominate over residues 446–467; that stretch reads SSTTAGWSGSSSGQTLSTQLWK.

In terms of assembly, interacts with ARF6. Interacts with clathrin heavy chains via the clathrin box-like motif. As to expression, detected in bone marrow, adrenal gland, trachea, lymph node, spinal cord, peripheral blood leukocytes, thyroid and stomach.

The protein resides in the cell membrane. In terms of biological role, GTPase activating protein that acts on ARF6. Plays a role in clathrin-dependent endocytosis. May play a role in erythropoiesis. This Homo sapiens (Human) protein is Stromal membrane-associated protein 1 (SMAP1).